Reading from the N-terminus, the 3916-residue chain is MADNQSLPKEPIAIIGTSCRFPGGANTPSKLWDLLCEKRDVQSRIPNDRFNVDAFYSTNGDKNGCTDVKRAYLLSEDIRVFDASFFKINPREAEAMDPQQRLLLEAVYEATEAAGLPMEDLKGSDTAVYVGCMTGDYHEMLMRDPQDMPKYMATGTARSILSNRISYLFDWKGPSMTIDTACSSSLVAVYDAVTALRNGVSKIACAGGANLILGPEMMISESKLHMLSPTGRSRMWDASANGYARGEGVAAIMMKTLSQALADGDHIQGVIREIGVNSDGRTNGITLPSPEAQKFLIRQTYKKAGLDVFKDRCQFFEAHGTGTPAGDPLEARAIHEAFFTDGDIVSEPMYVGSVKTAIGHLEGCAGLAGLIKALEAVKRGVIPPNQLFENLNPALKPYVSNLRLPTESKPWPKLAPGSARRASVNSFGFGGTNVHAIIEQFDHAQREASSADGIISTPLVLSANSDLSLRKQIAHFAEAIEHNDKGEVDRIIFTLAQRRSQLPLRAYFSGHGLQSIQQKLRDATAENAVLPFISQTVPPGQPPRILGVFTGQGAQWPTMGREILKASPFARTVMASLEESLASLAEPPIWTLTEQIMADKDFSRLSEAAISQPLCTAVQIMVVELLRKAGIAFNCVIGHSSGEITAAYTAGFLSATDAIRVAYLRGVCAKLAGGGNGETGSMMAVGLSYEEASAFCEENFAGLVDVAASNAPASTTLSGDKPSIEEAKASLDAQGTFARILKVDTAYHSHHMNPCAQPYLEKLQAAGVKSLPGDDSVEWYSSVLGERITASLHSEALCDEYWVENMVNPVLFSVASELVAEANPPCHVALEVGPHPALKGPFNQTYKRATGSPLPYHGTVTRNIHDVEALSNSLGFLWSHLGKSAVDFTAYTQSFSPSITAMADGLPPYAWDHTQSFWRESRKSLNYRQRTQPPHPLLGARSVEDTADSMRWINYLRLDDVPWLEGHKVEGQVVYPAAGYLVMAMEAARAIDASKEIQLTELSDVHILSAIQLTEGSQALETVFTLQVERNEPTFATASWTLSTPMSGRNDSWKSNAKGQLRVEFSSLDDAARLPSRSKPIASLTSVDMERFYSALANIGLEYTGEFKQLKSIDRQLGLATAHVGQVVPDFPAMIHPALLDGAFQSIFAAYCWPDDGSLQAPFVPTFFRSLRIANTSHLRHGEDLVIDSFLTNTNERELTADMDIFQSAEGQPVLQLQGLTCTSLLRPGPSNAKELYTKTEWEVDIASGIAQSDTQDQDTASDLELVDLCERLSYFYLRELNKAVGREEVSGFDWHYQRIFEWIDHLFPLIQSGRHPTIKTEWSSDSRDWLMQQSARFPGRIDLQLIQAVGENLPAVVRKQTTMLEHMVKDDMLNRIYKFGLGFERANVYLGRISKQIAHRYPRMNILEIGAGTGGATKGIMESLGTAFETYTFTDISTGFFEAAAEAFDHWADKMIFKPLNIESDPTDQGFPQGHYDFIIASNVLHATKSLAVTMRNTRKLLKPGGQLLLLEVTSDIVRVKLMMSGLSGWWLGGDDGRRYGPTIPVSQWDALLKQTGFSGVDKTVNDFVDAEKYMTSVMLSQAVDDRMEILRQPRLASSHWLSSQSITVVGGHCQDIGKDAMAIIHQMGHASSKPVIHHVGSFEELASSNIQTRSALVLEDLDEPILKDLTEDKLRGVQRLINESRQVLWVSRGCQKDEPFANMSIGMCRSLSSEYPHIHLQHVDIEGLVGPMTASLLVDAFLQLMYRASLKSDDLVWSIEAELVLREDKWFIPRVKSDEALNNQLNASKMTIRSVKTLHGDAVEIQQRSNQFVIAEPIPCIPVSASSPPVAITVTHSLLFPFQVGTKSSGYLCYGYIDSQPQTRVLAISGVNRSKISVPPFFVWDLSSSEIDAADLLRKTALAITADRLLSDFEAGATVLIHESDENLGAALQWKAAELDLNVILTTSESSMERSTDSLFIHALAPERLVNHIMPQCTKAVIDLSGRDYRIVDSPLRRCLPAHCKFHQLQDILGNASQGVNDPIIHGVRDASRSTLQLSGDGPVINLSDLSNMRPSIKDYATIVEFSVDTTIPAVVQPLEGSQLFRSDKTYLLIGFTGGLGKALCRWMVSCGVRHLALTTRNVAAIDQVWLQELRIQGAQVNLYQADVSDKAALSQAYDQIVKEMPPVCGAANAALLLSDRTFTELKVKDFTQVFGPKVKGTQNLHELLLDQKLDFFIMFSSLASVVGNRGQANYAASNLFMSAIAEQRRAKGLAASVMHIGMVLGVGYVSSTGAYEATLRSSNYMAISETDLLNMFSQAILVGQPSSTHAPELITGLNRFSLEPEAQKYFWRDNMRFCHHTLEEEHQERTSTTKVSISQRLSETKGTAEILAVVEEEFCTKLERLLQAEAGSVKTSQSLLGLGVDSLVAAEIRSWFLKELEVDTPVLEILNTASITELCSTVVSHLPTISEDTETKTEVTKQAIKTLNVVETSTVVSSASPTENEPFTIRNSPNSTQVTSESGVDEETSIQSKIDRSGPLSFAQERLWFLQQFLRDHSTYNVTMHYHISGPLRLHDLERAFQQVIHRHESLRTSFFIDPDTDLPTQAVLKDSSFRLEQKHNSTAKIEYKAMQGMSYDLENGNVVKAVIVPDSDGEFDLIFGFHHIALDGYSAQIMVRDLAMIYAGQTLSSKQQDYLDFAIAQKAAKVPYTTLAYWRSELEDLPPTLTVFDFAETKTRIPLTDYTTRALERRLSIEQSRSIKAVAKRLDVTPFHVHLATLQVVLSDLASANDLCIGITDANKNDATHIDTVGFFVNLLPLRLKLSSSQTLADLVANAKSKANGALSHSDMPFDVLLDEMKLPRSTTHSPLFQVVMNYKMGSTQKVPLADCQAQLVAFEDANNPYDLTFDIETYYDGSASISVKTQEYLYSESELSFVLDNYVEKLDLFTSEPSQTVDQICKPTAEQIGKALTLGRGERIPSPRLETLSHYFEKCVVNQPDDVALVTDKGQALTWSQLKALVNQIAMALVEAGAKQDSQVGVYCDPSMYILPTLIAIAEIGGVYVPLDTQNPIKRLQLMVDDCQADVLLIDDSTATLSLELETKAKMINVNTIKAGPSNTFHLDNRARGNGMGYIFYTSGTTGVPKAVALTHTSLVHHFDGFIHCNNLNKCRMLQQAPLGFDMSLTQMTLAIMLGGTLIVASSETRKDPTQLAQLMLDEKVTHTFMTPTLALSVIHHGYEYLRQCVDWEHASLAGEAMTTRVTSEFKRLGLRNLELCNGYGPTEITIIATCGSNELGDTLRDTHNPSIGRALPNYSCYILDENMQPVRPGLAGELVIGGAGVAIGYLNRQDLTEAKFLSDPFAPPEDVARGWTRMYRTGDKARFLSDGRLCFLGRIAGDSQIKLRGFRIELQDIASTIVKASDGKVPEAAVSLRGEGDSAYLVAFVILSQFNRPSDEKGYLKQLLEELSLPRYMKPAKIISISQLPMNASGKLDQYALDALPVSYEKDIVDKPLTETQERLKLGWLKALPFVDAAIGPDTDFFSAGGNSLRIVSLREYITREFGVTVSVFDLFQASTLGEMAAKIDGFTTQEATTISIDWEEETRIDADLNIVGVQEPLPSEATNGLQVALTGATGFLGVSILETLLEDKRVSKVHCLAVRSSSNTSDPVFSSSRVACYPGDLSLPRLGLSQEQFDQLANAVDRIIHNGADVSFLKTYQSLQRSNVSSSRELARMAITRRIPMHFVSTGGVVQLTGQDGLDEVSVIDSTPPNDGSLGYVASKWASEAILEKYASQYNLPVWIHRPSNITGPNAPKADLMQNIFHYSAKTASLPDLASWSGCFDFVPVDVVAAGIASSIYETQETVAYKHHCGTEKISVEDLPSYLEAKHGKIETVSIEEWLERSKAAGLDEVTAVLVEKTLSRGGIVPWLRREAN.

Residues 9–440 (KEPIAIIGTS…GTNVHAIIEQ (432 aa)) form the Ketosynthase family 3 (KS3) domain. Catalysis depends on for beta-ketoacyl synthase activity residues C182, H319, and H360. The segment at 548–869 (VFTGQGAQWP…VTRNIHDVEA (322 aa)) is malonyl-CoA:ACP transacylase (MAT) domain. An N-terminal hotdog fold region spans residues 935–1068 (HPLLGARSVE…GQLRVEFSSL (134 aa)). The tract at residues 935–1228 (HPLLGARSVE…GLTCTSLLRP (294 aa)) is dehydratase (DH) domain. Positions 935–1231 (HPLLGARSVE…CTSLLRPGPS (297 aa)) constitute a PKS/mFAS DH domain. H967 serves as the catalytic Proton acceptor; for dehydratase activity. The tract at residues 1084 to 1231 (LTSVDMERFY…CTSLLRPGPS (148 aa)) is C-terminal hotdog fold. D1141 functions as the Proton donor; for dehydratase activity in the catalytic mechanism. The tract at residues 1350-1584 (VGENLPAVVR…YMTSVMLSQA (235 aa)) is C-methyltransferase (CMeT) domain. Residues 2092–2266 (TYLLIGFTGG…AASVMHIGMV (175 aa)) are ketoreductase (KR) domain 1. Positions 2372-2449 (EILAVVEEEF…ELCSTVVSHL (78 aa)) constitute a Carrier 1 domain. Residue S2409 is modified to O-(pantetheine 4'-phosphoryl)serine. The disordered stretch occupies residues 2482 to 2511 (ASPTENEPFTIRNSPNSTQVTSESGVDEET). The segment covering 2486-2505 (ENEPFTIRNSPNSTQVTSES) has biased composition (polar residues). Positions 2522-2806 (PLSFAQERLW…VNLLPLRLKL (285 aa)) are condensation. An adenylation region spans residues 2973–3385 (FEKCVVNQPD…RIAGDSQIKL (413 aa)). The region spanning 3493-3570 (KPLTETQERL…EMAAKIDGFT (78 aa)) is the Carrier 2 domain. The residue at position 3530 (S3530) is an O-(pantetheine 4'-phosphoryl)serine. The segment at 3612-3833 (LTGATGFLGV…DFVPVDVVAA (222 aa)) is thiolester reductase (R) domain.

The protein in the C-terminal section; belongs to the NRP synthetase family.

Its pathway is mycotoxin biosynthesis. Functionally, fusarin C synthetase; part of the gene cluster that mediates the biosynthesis of the mycotoxin fusarin C. Within the cluster, FUS1, FUS2, FUS8 and FUS9 are sufficient for fusarin production. The roles of the other FUS members are yet undetermined. The fusarin C synthetase FUS1 is responsible for the condensation of one acetyl-coenzyme A (CoA) unit with six malonyl-CoA units and the amide linkage of the arising heptaketide and homoserine, subsequently releasing the first intermediate, prefusarin, as an alcohol with an open ring structure. The cytochrome P450 monooxygenase FUS8 participates in multiple oxidation processes at carbon C-20 and is able to use the FUS1 product as substrate, resulting in formation of 20-hydroxy-prefusarin. This reaction seems to be essential before the 2-pyrrolidone ring closure can be catalyzed by FUS2, generating 20-hydroxy-fusarin. FUS8 is able to further oxidizes carbon C-20 after ring closure, resulting in the formation of carboxy-fusarin C. As the last step, FUS9 methylates the hydroxyl group at C-21 to generate fusarin C. Fusarin C can then rearrange to epi-fusarin C, the (z)-isomers, and fusarin A and fusarin D. The protein is Fusarin C synthetase of Gibberella moniliformis (strain M3125 / FGSC 7600) (Maize ear and stalk rot fungus).